Consider the following 176-residue polypeptide: Flavodoxin 1 (176 aa).

The region spanning His-4–Ser-165 is the Flavodoxin-like domain.

This sequence belongs to the flavodoxin family. FMN is required as a cofactor.

Its function is as follows. Low-potential electron donor to a number of redox enzymes. The polypeptide is Flavodoxin 1 (fldA) (Shigella flexneri).